A 126-amino-acid polypeptide reads, in one-letter code: Fluoride-specific ion channel FluC (126 aa).

Transmembrane regions (helical) follow at residues 3–23 (FAIL…RFLV), 37–57 (IGTL…IACV), 70–90 (VIGL…MDNV), and 104–124 (NVLL…HWLM). Residues glycine 77 and threonine 80 each contribute to the Na(+) site.

The protein belongs to the fluoride channel Fluc/FEX (TC 1.A.43) family.

The protein resides in the cell inner membrane. The catalysed reaction is fluoride(in) = fluoride(out). With respect to regulation, na(+) is not transported, but it plays an essential structural role and its presence is essential for fluoride channel function. In terms of biological role, fluoride-specific ion channel. Important for reducing fluoride concentration in the cell, thus reducing its toxicity. This chain is Fluoride-specific ion channel FluC, found in Vibrio cholerae serotype O1 (strain ATCC 39541 / Classical Ogawa 395 / O395).